The sequence spans 258 residues: Protein CHAPERONE-LIKE PROTEIN OF POR1, chloroplastic (258 aa).

The transit peptide at 1 to 48 (MSSSLLLSGSTVSSSFIAPSKPSLVRNSSKTSLLPFRNVSRSFKTVKC) directs the protein to the chloroplast. Thr49 is subject to N-acetylthreonine. Residues 67–122 (WDPYKRLGVSPYASEEEIWASRNFLLQQYAGHERSEESIEGAFEKLLMSSFIRRKK) are J-like domain required for holdase chaperone activity. The next 3 membrane-spanning stretches (helical) occupy residues 162–182 (FLFA…GPAF), 207–227 (LIGI…IPMI), and 237–257 (TLEL…CTFL).

Belongs to the chaperone-like protein of POR1 protein family. In terms of assembly, interacts with PORB in chloroplast. Interacts with PORA during plastid import. Expressed ubiquitously with higher levels in young leaves, flowers, and the root elongation zone.

Its subcellular location is the mitochondrion membrane. The protein localises to the plastid. It localises to the chloroplast envelope. The protein resides in the chloroplast thylakoid membrane. Essential protein required during embryogenesis. Exhibits holdase chaperone activity involved in the stabilization of NADPH:protochlorophyllide oxidoreductase (POR) proteins against photooxidative stress during POR proteins import into chloroplasts. Required for chloroplast biogenesis and development. When expressed in yeast, triggers mitochondria-mediated cell death associated with the loss of mitochondrial membrane potential. This chain is Protein CHAPERONE-LIKE PROTEIN OF POR1, chloroplastic, found in Arabidopsis thaliana (Mouse-ear cress).